Consider the following 774-residue polypeptide: MEKSNRRKRPSTPHLSCELCRERKIKCDKVDPCNNCVSAGVVCIPVHRPRLPRGVHARRARPMSPTFVPPRAPTPVAGPVPSEKKQTDHSSGAVAAVDDDLRRRVHRLEAVVNSMRAAMQDSSPATVKQVSCEYWGIVGRADEEKSVLNDSYPAPTSSLACNASIPMTVQGQPPFESRPDCFWNNMVGEIEHFGGDVGSSSETKSDDHSSLAPNMPRMGDGGLRFLGLSGNNPTLTWTPVLEGKEMTRQLCQIYLQQVDPIIKILHRPTVEKWMLHGERYLDYPERHVAVDALRSAICYATAASLTDDQCSAIFQRSRSSGIVEDFRRECETALERSGFLVSPSITGLQAFVLYLIARRSEDRGQAAWTLTAVAVRLAKALGLHRERDETFFNQQMRRRLWLTISLMDLQASFSQASEPLISTEEATSTFFLPKHINDSDLDPTMTHEIPDREGLCDTTFALVTYHIQLAGRALNFGTTASPQHKASQQQHAQRFEENALRLLHFCDPESSPYAWFTWHGTQCLVSGARLSALRPLQLPQPSNGSSQPPSSPSPRPQEHNHELLRLALNVLEKAHLMHTDPRGEGFRWYVTMPWHALAVAINECSLSPDVVRIQSAWPTIEACYQLLRRKGVAGQEEAIQRPLEKLICQARDKASPLLQLARSSPTFSLGSSTGTSAAPTPRSRASSTPSDTLSDLSWPTAFSHAPSQLGMELAPVGPVQPFAKLDLDSLLSQFDIQGQPLLAGQIPPVDAELSLRTWEQLMSDIDAESNQLLP.

The zn(2)-C6 fungal-type DNA-binding region spans 17–43 (CELCRERKIKCDKVDPCNNCVSAGVVC). Disordered stretches follow at residues 61 to 94 (RPMSPTFVPPRAPTPVAGPVPSEKKQTDHSSGAV), 536 to 559 (LQLPQPSNGSSQPPSSPSPRPQEH), and 665 to 697 (PTFSLGSSTGTSAAPTPRSRASSTPSDTLSDLS). A compositionally biased stretch (pro residues) spans 67–78 (FVPPRAPTPVAG). Positions 536 to 548 (LQLPQPSNGSSQP) are enriched in low complexity. Polar residues predominate over residues 665–674 (PTFSLGSSTG). Positions 675 to 697 (TSAAPTPRSRASSTPSDTLSDLS) are enriched in low complexity.

It localises to the nucleus. Functionally, transcription factor that specifically regulates the neosartoricin biosynthesis gene cluster. The chain is C6 finger domain transcription factor nscR from Aspergillus fumigatus (strain ATCC MYA-4609 / CBS 101355 / FGSC A1100 / Af293) (Neosartorya fumigata).